A 308-amino-acid chain; its full sequence is MQEIENLHQSVLLQEVLQAFTPLEEGVLIDCTLGLGGHSKALLSQKPHLKLIGIDKDKFAQEIAKERLKAFEGRYNLLSGGFAKRFKEALETHNKEIKGVLVDLGVSSLQLDDDDRGFNFHSHALDMRMDLKSDLNAQKVINSYPVIALEKIFRDYGEIKEYKKIAHKIAERRTKKPFKDAKDLSEFLSSFSKNKKIHPATLVFQAVRIEVNSELEELKEFLQCARNLKGAILCVISFHSLEDGLVKNAFKDYAKNCICDPLSFKCACSNNHALGEILTKKPITPSPEEIKNNRRSRSAKMRVFKFKP.

Residues 36–38 (GGH), Asp55, Phe86, Asp103, and Gln110 contribute to the S-adenosyl-L-methionine site.

The protein belongs to the methyltransferase superfamily. RsmH family.

It is found in the cytoplasm. The catalysed reaction is cytidine(1402) in 16S rRNA + S-adenosyl-L-methionine = N(4)-methylcytidine(1402) in 16S rRNA + S-adenosyl-L-homocysteine + H(+). In terms of biological role, specifically methylates the N4 position of cytidine in position 1402 (C1402) of 16S rRNA. This is Ribosomal RNA small subunit methyltransferase H from Helicobacter pylori (strain B38).